Reading from the N-terminus, the 116-residue chain is Flagellar transcriptional regulator FlhD (116 aa).

It belongs to the FlhD family. As to quaternary structure, homodimer; disulfide-linked. Forms a heterohexamer composed of two FlhC and four FlhD subunits. Each FlhC binds a FlhD dimer, forming a heterotrimer, and a hexamer assembles by dimerization of two heterotrimers.

Its subcellular location is the cytoplasm. Its function is as follows. Functions in complex with FlhC as a master transcriptional regulator that regulates transcription of several flagellar and non-flagellar operons by binding to their promoter region. Activates expression of class 2 flagellar genes, including fliA, which is a flagellum-specific sigma factor that turns on the class 3 genes. Also regulates genes whose products function in a variety of physiological pathways. The polypeptide is Flagellar transcriptional regulator FlhD (Pantoea ananatis (strain LMG 20103)).